Here is a 505-residue protein sequence, read N- to C-terminus: 2-isopropylmalate synthase (505 aa).

In terms of domain architecture, Pyruvate carboxyltransferase spans 5-269; sequence IKIFDTTLRD…ETGIHTEYLY (265 aa). 4 residues coordinate Mn(2+): Asp-14, His-204, His-206, and Asn-240. Positions 393 to 505 are regulatory domain; that stretch reads SLLYFHTFTG…AVNRFELRKR (113 aa).

This sequence belongs to the alpha-IPM synthase/homocitrate synthase family. LeuA type 1 subfamily. Homodimer. The cofactor is Mn(2+).

The protein resides in the cytoplasm. It catalyses the reaction 3-methyl-2-oxobutanoate + acetyl-CoA + H2O = (2S)-2-isopropylmalate + CoA + H(+). The protein operates within amino-acid biosynthesis; L-leucine biosynthesis; L-leucine from 3-methyl-2-oxobutanoate: step 1/4. Functionally, catalyzes the condensation of the acetyl group of acetyl-CoA with 3-methyl-2-oxobutanoate (2-ketoisovalerate) to form 3-carboxy-3-hydroxy-4-methylpentanoate (2-isopropylmalate). This is 2-isopropylmalate synthase from Sediminispirochaeta smaragdinae (strain DSM 11293 / JCM 15392 / SEBR 4228) (Spirochaeta smaragdinae).